A 278-amino-acid chain; its full sequence is Envelope glycoprotein L (278 aa).

The N-terminal stretch at 1–30 is a signal peptide; the sequence is MCRRPDCGFSFSPGPVVLLWCCLLLPIVSS. In terms of domain architecture, gL betaherpesvirus-type spans 43-256; the sequence is VPAECPELTR…DKYYAGLPPE (214 aa). The cysteines at positions 154 and 159 are disulfide-linked.

This sequence belongs to the herpesviridae glycoprotein L (gL) family. Betaherpesvirinae gL subfamily. In terms of assembly, interacts with glycoprotein H (gH); this interaction is necessary for the correct processing and cell surface expression of gH. Forms the envelope pentamer complex (PC) composed of gH, gL, UL128, UL130, and UL131A. The pentamer interacts with host NRP2. Forms the envelope trimer complex composed of gH, gL, and gO. The trimer interacts with host PDGFRA. The trimer also interacts with host EPHA2.

It localises to the virion membrane. The protein resides in the host cell membrane. It is found in the host Golgi apparatus. Its subcellular location is the host trans-Golgi network. The heterodimer glycoprotein H-glycoprotein L is required for the fusion of viral and plasma membranes leading to virus entry into the host cell. Acts as a functional inhibitor of gH and maintains gH in an inhibited form. Upon binding to host integrins, gL dissociates from gH leading to activation of the viral fusion glycoproteins gB and gH. In human cytomegalovirus, forms two distincts complexes to mediate viral entry, a trimer and a pentamer at the surface of the virion envelope. The gH-gL-gO trimer is required for infection in fibroblasts by interacting with host PDGFRA, and in glioblastoma cells by interacting with host EPHA2. The gH-gL-UL128-UL130-UL131A pentamer is essential for viral entry in epithelial, endothelial and myeloid cells via interaction with host NRP2. The protein is Envelope glycoprotein L of Human cytomegalovirus (strain 5040) (HHV-5).